Consider the following 905-residue polypeptide: Protein translocase subunit SecA (905 aa).

Residues glutamine 89, 107-111 (GEGKT), and aspartate 502 each bind ATP. Zn(2+) contacts are provided by cysteine 887, cysteine 889, cysteine 898, and histidine 899.

This sequence belongs to the SecA family. Monomer and homodimer. Part of the essential Sec protein translocation apparatus which comprises SecA, SecYEG and auxiliary proteins SecDF-YajC and YidC. Zn(2+) is required as a cofactor.

It localises to the cell inner membrane. The protein localises to the cytoplasm. The catalysed reaction is ATP + H2O + cellular proteinSide 1 = ADP + phosphate + cellular proteinSide 2.. Its function is as follows. Part of the Sec protein translocase complex. Interacts with the SecYEG preprotein conducting channel. Has a central role in coupling the hydrolysis of ATP to the transfer of proteins into and across the cell membrane, serving both as a receptor for the preprotein-SecB complex and as an ATP-driven molecular motor driving the stepwise translocation of polypeptide chains across the membrane. This Rhizobium leguminosarum bv. trifolii (strain WSM2304) protein is Protein translocase subunit SecA.